The following is a 175-amino-acid chain: MGRTLENKQQIVTEIKSLLNDSEMAVVLDYKGLTIKEMSDLRSRLRTTNGICRVTKNSLMRKAIDGDSNWNDLESLLTGTNAFVLIKEDVGGAVKAIQSFQKDTKKSETKGALFEGRLLSDSEIKEIASLPSKEVLMAKIAGALNGVATKIAISINEVPSGLARSLKQHSEKSES.

The protein belongs to the universal ribosomal protein uL10 family. As to quaternary structure, part of the ribosomal stalk of the 50S ribosomal subunit. The N-terminus interacts with L11 and the large rRNA to form the base of the stalk. The C-terminus forms an elongated spine to which L12 dimers bind in a sequential fashion forming a multimeric L10(L12)X complex.

Its function is as follows. Forms part of the ribosomal stalk, playing a central role in the interaction of the ribosome with GTP-bound translation factors. This chain is Large ribosomal subunit protein uL10, found in Prochlorococcus marinus (strain MIT 9215).